Here is a 320-residue protein sequence, read N- to C-terminus: ATP-dependent 6-phosphofructokinase (320 aa).

Position 11 (Gly-11) interacts with ATP. 21-25 (RAVVR) is an ADP binding site. Residues 72 to 73 (RC) and 102 to 105 (GDGS) contribute to the ATP site. Residue Asp-103 participates in Mg(2+) binding. 125-127 (TID) contributes to the substrate binding site. The Proton acceptor role is filled by Asp-127. An ADP-binding site is contributed by Arg-154. Substrate contacts are provided by residues Arg-162 and 169-171 (MGR). Residues 185 to 187 (GAE) and 214 to 216 (KTH) contribute to the ADP site. Residues Glu-223, Arg-244, and 250-253 (HIQR) contribute to the substrate site.

The protein belongs to the phosphofructokinase type A (PFKA) family. ATP-dependent PFK group I subfamily. Prokaryotic clade 'B1' sub-subfamily. As to quaternary structure, homotetramer. The cofactor is Mg(2+).

The protein localises to the cytoplasm. It carries out the reaction beta-D-fructose 6-phosphate + ATP = beta-D-fructose 1,6-bisphosphate + ADP + H(+). It functions in the pathway carbohydrate degradation; glycolysis; D-glyceraldehyde 3-phosphate and glycerone phosphate from D-glucose: step 3/4. Its activity is regulated as follows. Allosterically activated by ADP and other diphosphonucleosides, and allosterically inhibited by phosphoenolpyruvate. Functionally, catalyzes the phosphorylation of D-fructose 6-phosphate to fructose 1,6-bisphosphate by ATP, the first committing step of glycolysis. This is ATP-dependent 6-phosphofructokinase from Clostridium botulinum (strain Alaska E43 / Type E3).